A 156-amino-acid polypeptide reads, in one-letter code: CRIB domain-containing protein RIC10 (156 aa).

In terms of domain architecture, CRIB spans 30–43 (IGFPTDVKHVAHIG). Polar residues predominate over residues 68–77 (RPSSFSNARP). The segment at 68 to 156 (RPSSFSNARP…SYKSTVSRLI (89 aa)) is disordered. Over residues 78–96 (STSFFTSSSSTDFDQGSSQ) the composition is skewed to low complexity. Residues 117–128 (NNKKKSSRRKKS) are compositionally biased toward basic residues. A compositionally biased stretch (low complexity) spans 129 to 156 (SSSSSSPKSSRSSVLSKSSYKSTVSRLI).

In terms of tissue distribution, expressed in roots, leaves, flowers and pollen.

Its subcellular location is the cytoplasm. In terms of biological role, functions as a downstream effector of Rho-related GTP binding proteins of the 'Rho of Plants' (ROPs) family. Participates in the propagation of ROP GTPase signals in specific cellular responses. Is involved in pollen tube growth regulation. The chain is CRIB domain-containing protein RIC10 (RIC10) from Arabidopsis thaliana (Mouse-ear cress).